The primary structure comprises 211 residues: Methylthioribulose-1-phosphate dehydratase (211 aa).

Residues His-94 and His-96 each coordinate Zn(2+).

It belongs to the aldolase class II family. MtnB subfamily. The cofactor is Zn(2+).

The enzyme catalyses 5-(methylsulfanyl)-D-ribulose 1-phosphate = 5-methylsulfanyl-2,3-dioxopentyl phosphate + H2O. It functions in the pathway amino-acid biosynthesis; L-methionine biosynthesis via salvage pathway; L-methionine from S-methyl-5-thio-alpha-D-ribose 1-phosphate: step 2/6. Its function is as follows. Catalyzes the dehydration of methylthioribulose-1-phosphate (MTRu-1-P) into 2,3-diketo-5-methylthiopentyl-1-phosphate (DK-MTP-1-P). This chain is Methylthioribulose-1-phosphate dehydratase, found in Pseudoalteromonas translucida (strain TAC 125).